Reading from the N-terminus, the 379-residue chain is Wnt inhibitory factor 1 (379 aa).

An N-terminal signal peptide occupies residues 1-28 (MARRSAFPAAALWLWSILLCLLALRAEA). In terms of domain architecture, WIF spans 38–177 (LWIDAHQARV…PQNAIFFKTC (140 aa)). Asn88 is a glycosylation site (N-linked (GlcNAc...) asparagine). 7 disulfide bridges follow: Cys140/Cys177, Cys182/Cys192, Cys186/Cys198, Cys200/Cys209, Cys214/Cys224, Cys218/Cys230, and Cys232/Cys241. EGF-like domains are found at residues 178-210 (QQAE…PHCE), 211-242 (KALC…VNCD), 243-271 (KANC…LEGE), 274-306 (EISK…DLCS), and 307-338 (KPVC…RHCN). Asn245 carries N-linked (GlcNAc...) asparagine glycosylation. Cystine bridges form between Cys246–Cys256, Cys250–Cys262, Cys278–Cys288, Cys282–Cys294, Cys296–Cys305, Cys310–Cys320, Cys314–Cys326, and Cys328–Cys337. A disordered region spans residues 354 to 379 (AQLRQHTPSLKKAEERRDPPESNYIW). A compositionally biased stretch (basic and acidic residues) spans 364 to 373 (KKAEERRDPP).

Interacts with MYOC.

The protein resides in the secreted. Binds to WNT proteins and inhibits their activities. May be involved in mesoderm segmentation. This chain is Wnt inhibitory factor 1 (WIF1), found in Homo sapiens (Human).